The following is a 264-amino-acid chain: MDTRPIGFLDSGVGGLTVVCELIRQLPHEKIVYIGDSARAPYGPRPKKQIKEYTWELVNFLLTQNVKMIVFACNTATAVAWEEVKATLDIPVLGVVLPGASAAIKSTTKGQVGVIGTPMTVASDIYRKKIQLLAPSVQVRSLACPKFVPIVESNEMCSSIAKKIVYDSLSPLVGKIDTLVLGCTHYPLLRPIIQNVMGPSVKLIDSGAECVRDISVLLNYFDINGNYHQKAVEHRFFTTANPEIFQEIASIWLKQKINVEHVTL.

Substrate is bound by residues 10–11 (DS) and 42–43 (YG). The Proton donor/acceptor role is filled by Cys73. 74–75 (NT) serves as a coordination point for substrate. Cys183 serves as the catalytic Proton donor/acceptor. Residue 184–185 (TH) participates in substrate binding.

Belongs to the aspartate/glutamate racemases family.

It carries out the reaction L-glutamate = D-glutamate. It participates in cell wall biogenesis; peptidoglycan biosynthesis. In terms of biological role, provides the (R)-glutamate required for cell wall biosynthesis. The polypeptide is Glutamate racemase (Streptococcus pyogenes serotype M6 (strain ATCC BAA-946 / MGAS10394)).